A 300-amino-acid polypeptide reads, in one-letter code: Acetylglutamate kinase (300 aa).

Residues 68–69, R90, and N194 each bind substrate; that span reads GG.

This sequence belongs to the acetylglutamate kinase family. ArgB subfamily.

The protein localises to the cytoplasm. The catalysed reaction is N-acetyl-L-glutamate + ATP = N-acetyl-L-glutamyl 5-phosphate + ADP. It functions in the pathway amino-acid biosynthesis; L-arginine biosynthesis; N(2)-acetyl-L-ornithine from L-glutamate: step 2/4. Catalyzes the ATP-dependent phosphorylation of N-acetyl-L-glutamate. This is Acetylglutamate kinase from Methanocella arvoryzae (strain DSM 22066 / NBRC 105507 / MRE50).